A 742-amino-acid chain; its full sequence is Clamp-binding protein CrfC (742 aa).

A clamp-binding consensus region spans residues 41-45 (QLALP). Residues 66-402 (SRLEMVLAIV…LWEDSLFAQP (337 aa)) form the Dynamin-type G domain. The G1 motif stretch occupies residues 76-83 (GTMKAGKS). The segment at 102–104 (MTA) is G2 motif. The G3 motif stretch occupies residues 236–239 (DTPG). The G4 motif stretch occupies residues 297–300 (NKFD). The tract at residues 331-334 (FPVS) is G5 motif. The stretch at 440–472 (RAHGLNVACEQLRQNIHQVEESLQLLQLNQAQV) forms a coiled coil.

This sequence belongs to the TRAFAC class dynamin-like GTPase superfamily. Dynamin/Fzo/YdjA family. In terms of assembly, forms homooligomers. Binds to the beta sliding clamp processivity factor (DnaN) in the presence and absence of DNA, may bind to the clamp itself as homodimers or trimers. Homooligomers may be able to bind more than 1 clamp complex.

The protein resides in the cytoplasm. In terms of biological role, important for the colocalization of sister nascent DNA strands after replication fork passage during DNA replication, and for positioning and subsequent partitioning of sister chromosomes. Does not have GTPase activity on its own. The sequence is that of Clamp-binding protein CrfC (crfC) from Escherichia coli.